A 1829-amino-acid chain; its full sequence is Sodium channel protein type 4 subunit alpha A (1829 aa).

Over 1–124 the chain is Cytoplasmic; sequence MARLLPPTGT…RGAIKILIHS (124 aa). The disordered stretch occupies residues 32–52; the sequence is STREELEGAEEEPQAPSSDLE. The I repeat unit spans residues 106 to 421; sequence CISPFSIVRR…VVAMAYDEQN (316 aa). A helical membrane pass occupies residues 125–143; that stretch reads LFSMFIMITILSNCVFMTM. Over 144–150 the chain is Extracellular; sequence SNPPAWS. Residues 151–171 form a helical membrane-spanning segment; the sequence is KTVEYVFTGIYTFEATVKVLS. Residues 172 to 185 are Cytoplasmic-facing; it reads RGFCIGPFTFLRDP. The chain crosses the membrane as a helical span at residues 186 to 203; that stretch reads WNWLDFMVISMAYVTEFV. The Extracellular segment spans residues 204-209; the sequence is DLGNVS. Residue asparagine 207 is glycosylated (N-linked (GlcNAc...) asparagine). A helical membrane pass occupies residues 210–226; the sequence is ALRTFRVLRALKTITVI. At 227–245 the chain is on the cytoplasmic side; that stretch reads PGLKTIVGALIQSVKKMID. Residues 246–265 form a helical membrane-spanning segment; it reads VMILTIFALAVFALIGLQLF. Over 266–358 the chain is Extracellular; that stretch reads MGNLRQKCIR…PNYGYTSYDN (93 aa). The cysteines at positions 273 and 327 are disulfide-linked. Asparagine 280, asparagine 293, and asparagine 329 each carry an N-linked (GlcNAc...) asparagine glycan. Residues cysteine 336 and cysteine 342 are joined by a disulfide bond. Positions 359–383 form an intramembrane region, pore-forming; that stretch reads FGWAFLALFRLMTQDFWENLFQLTL. The Extracellular segment spans residues 384 to 390; the sequence is RAAGKTY. A helical membrane pass occupies residues 391 to 411; that stretch reads MIFFVVVIFLGSFYLINLILA. At 412–582 the chain is on the cytoplasmic side; it reads VVAMAYDEQN…KWVHFVVMDP (171 aa). The segment covering 446–467 has biased composition (polar residues); the sequence is ETGSKASLASQKTQSRGSNRTG. The disordered stretch occupies residues 446-468; sequence ETGSKASLASQKTQSRGSNRTGS. An II repeat occupies 564–836; that stretch reads CCAPWILFKK…QIAIGRITRG (273 aa). A helical transmembrane segment spans residues 583–601; the sequence is FVDLGITICIVLNTLFMAM. Residues 602–612 are Extracellular-facing; that stretch reads EHYPMSPHFEH. Residues 613–632 form a helical membrane-spanning segment; it reads VLSVGNLVFTGIFTAEMVFK. Over 633-646 the chain is Cytoplasmic; it reads LIAMDPYYYFQVGW. Residues 647 to 666 traverse the membrane as a helical segment; it reads NIFDSIIVTLSLVELGLANV. The Extracellular portion of the chain corresponds to 667–668; it reads QG. The chain crosses the membrane as a helical span at residues 669–686; it reads LSVLRSFRLLRVFKLAKS. At 687–702 the chain is on the cytoplasmic side; the sequence is WPTLNMLIKIIGNSVG. The helical transmembrane segment at 703-721 threads the bilayer; it reads ALGNLTLVLAIIVFIFAVV. The Extracellular portion of the chain corresponds to 722 to 750; sequence GMQLFGKSYKDCVCKISEDCELPRWHMND. Cysteine 735 and cysteine 741 are joined by a disulfide. An intramembrane region (pore-forming) is located at residues 751-771; sequence FFHSFLIVFRILCGEWIETMW. Residues 772–782 lie on the Extracellular side of the membrane; that stretch reads DCMEVAGASMC. A disulfide bond links cysteine 773 and cysteine 782. A helical transmembrane segment spans residues 783-801; the sequence is LIVFMMVMVIGNLVVLNLF. The Cytoplasmic portion of the chain corresponds to 802–998; sequence LALLLSSFSG…TCFTIVEHDY (197 aa). Residues 901 to 957 are disordered; the sequence is SDVEEDEDSESSDEEDAKATLNDGDSSVCSTVDYQPPEPEPEPEEVEEEEPEPEEPE. The segment covering 902–916 has biased composition (acidic residues); that stretch reads DVEEDEDSESSDEED. Over residues 923–933 the composition is skewed to polar residues; that stretch reads DGDSSVCSTVD. The span at 939 to 957 shows a compositional bias: acidic residues; that stretch reads PEPEPEEVEEEEPEPEEPE. The III repeat unit spans residues 979 to 1292; the sequence is WGKKWWNLRR…KKYYNAMKKL (314 aa). The helical transmembrane segment at 999-1016 threads the bilayer; the sequence is FETFIIFMILLSSGALAF. The Extracellular segment spans residues 1017–1029; the sequence is EDINIERRRVIKT. A helical membrane pass occupies residues 1030–1048; the sequence is ILEYADKVFTYIFIVEMLL. Residues 1049 to 1062 are Cytoplasmic-facing; the sequence is KWVAYGFKTYFTNA. A helical transmembrane segment spans residues 1063–1081; the sequence is WCWLDFLIVDVSLVSLTAN. Topologically, residues 1082–1089 are extracellular; that stretch reads LMGYSELG. The chain crosses the membrane as a helical span at residues 1090 to 1108; sequence AIKSLRTLRALRPLRALSR. The Cytoplasmic segment spans residues 1109 to 1125; the sequence is FEGMRVVVNALVGAIPS. Residues 1126–1145 traverse the membrane as a helical segment; sequence IFNVLLVCLIFWLIFSIMGV. Residues 1146–1196 lie on the Extracellular side of the membrane; sequence NLFAGKFYHCINTTTEERIPMDVVNNKSDCMALMYTNEVRWVNVKVNYDNV. A disulfide bridge connects residues cysteine 1155 and cysteine 1175. Asparagine 1157 and asparagine 1171 each carry an N-linked (GlcNAc...) asparagine glycan. Positions 1197 to 1218 form an intramembrane region, pore-forming; that stretch reads GLGYLSLLQIATFKGWMDIMYA. Over 1219-1235 the chain is Extracellular; sequence AVDSREVDEQPSYEINL. A helical membrane pass occupies residues 1236–1257; that stretch reads YMYLYFVIFIIFGSFFTLNLFI. At 1258–1320 the chain is on the cytoplasmic side; it reads GVIIDNFNQQ…LVFDFISKQF (63 aa). Positions 1276-1278 are important for rapid channel inactivation; it reads IFM. The stretch at 1301–1599 is one IV repeat; that stretch reads IPRPSNIIQG…WEKFDVDATQ (299 aa). A helical membrane pass occupies residues 1321–1338; sequence FDIFIMVLICLNMVTMMI. Residues 1339-1349 lie on the Extracellular side of the membrane; that stretch reads ETDDQSAEKEY. Residues 1350–1368 form a helical membrane-spanning segment; the sequence is VLYQINLVFIVVFTSECVL. The Cytoplasmic segment spans residues 1369–1380; the sequence is KLFALRQYFFTI. The helical transmembrane segment at 1381–1398 threads the bilayer; the sequence is GWNVFDFVVVILSIAGLM. Residues 1399 to 1411 lie on the Extracellular side of the membrane; the sequence is LSDIIEKYFVSPT. A helical transmembrane segment spans residues 1412–1428; sequence LFRVIRLARIGRVLRLI. At 1429-1447 the chain is on the cytoplasmic side; sequence RGAKGIRTLLFALMMSLPA. A helical transmembrane segment spans residues 1448-1465; that stretch reads LFNIGLLLFLIMFIFSIF. The Extracellular segment spans residues 1466–1487; that stretch reads GMSNFAYVKKQAGIDDIFNFET. The segment at residues 1488-1510 is an intramembrane region (pore-forming); the sequence is FGGSIICLFEITTSAGWDGLLLP. At 1511-1540 the chain is on the extracellular side; it reads ILNSGPPDCDPDFENPGTDVRGNCGNPGMG. An intrachain disulfide couples cysteine 1519 to cysteine 1534. A helical membrane pass occupies residues 1541 to 1563; the sequence is IMFFCSYIIMSFLVVVNMYIAII. At 1564–1829 the chain is on the cytoplasmic side; it reads LENFNNAQEE…NATTIKESIV (266 aa). The 30-residue stretch at 1693–1722 folds into the IQ domain; it reads EERAAIAVQRIYRRHLLKRAIRYACFMRRS. Residues 1765 to 1786 are disordered; sequence PMRPNSQPPKPSQVTQTRASVT.

Belongs to the sodium channel (TC 1.A.1.10) family. Nav1.4/SCN4A subfamily. In terms of assembly, voltage-gated sodium (Nav) channels consist of an ion-conducting alpha subunit which is functional on its own associated with regulatory beta subunits. As to expression, expressed in skeletal muscle, brain, spinal cord, and eye.

The protein localises to the cell membrane. It carries out the reaction Na(+)(in) = Na(+)(out). Its function is as follows. Pore-forming subunit of a voltage-gated sodium (Nav) channel that directly mediates the depolarizing phase of action potentials in excitable membranes. Navs, also called VGSCs (voltage-gated sodium channels) or VDSCs (voltage-dependent sodium channels), operate by switching between closed and open conformations depending on the voltage difference across the membrane. In the open conformation they allow Na(+) ions to selectively pass through the pore, along their electrochemical gradient. The influx of Na+ ions provokes membrane depolarization, initiating the propagation of electrical signals throughout cells and tissues. In Danio rerio (Zebrafish), this protein is Sodium channel protein type 4 subunit alpha A (scn4aa).